Consider the following 153-residue polypeptide: Proline-rich membrane anchor 1 (153 aa).

An N-terminal signal peptide occupies residues 1 to 35 (MLLRDLVLRRGCCWSSLLLHCALHPLWGFVQVTHG). The Extracellular portion of the chain corresponds to 36 to 92 (EPQKSCSKVTDSCRHVCQCRPPPPLPPPPPPPPPPRLLSAPAPNSTSCPTEESWWSG). The 15-residue stretch at 56–70 (PPPPLPPPPPPPPPP) folds into the PRAD domain. The segment covering 59–71 (PLPPPPPPPPPPR) has biased composition (pro residues). The segment at 59 to 79 (PLPPPPPPPPPPRLLSAPAPN) is disordered. The N-linked (GlcNAc...) asparagine glycan is linked to N79. Residues 93 to 113 (LVIIIAVCCASLVFLTVLVII) traverse the membrane as a helical segment. The Cytoplasmic portion of the chain corresponds to 114 to 153 (CYKAIKRKPLRKDENGTSVAEYPMSASQSNKGVDVNNAVV).

As to quaternary structure, interacts with ACHE, probably through disulfide bonds.

It is found in the cell membrane. The protein localises to the cell junction. It localises to the synapse. In terms of biological role, required to anchor acetylcholinesterase (ACHE) to the basal lamina of the neuromuscular junction and to the membrane of neuronal synapses in brain. Also able to organize ACHE into tetramers. The polypeptide is Proline-rich membrane anchor 1 (PRIMA1) (Homo sapiens (Human)).